The sequence spans 479 residues: mRNA export factor ICP27 homolog (479 aa).

Low complexity predominate over residues 1 to 15 (MVPSQRLSRTSSISS). 2 disordered regions span residues 1–77 (MVPS…PSSV) and 91–210 (KKWD…NKPW). Positions 35–44 (TDCDLDPMEG) are enriched in acidic residues. Residues 61–146 (DEDPTPAHAI…TDESYGKRRH (86 aa)) are nuclear export signal and interaction with host NXF1. The segment at 127–130 (KRRR) is nuclear localization signal. Residues 132-142 (EVHGCTDESYG) show a composition bias toward basic and acidic residues. The tract at residues 143–145 (KRR) is nuclear localization signal. The Zn(2+) site is built by Cys354, His445, Cys449, and Cys454. The segment at 354 to 454 (CFLPNTRDYN…HTRDCRSASC (101 aa)) adopts a CHC2-type zinc-finger fold.

This sequence belongs to the HHV-1 ICP27 protein family. As to quaternary structure, interacts with host XPO1 and with the XPO1 export pathway components small GTPase RAN and nucleoporin NUP214. Interacts with host SPEN, OTT1 and OTT3. Interacts with host SRSF1, SRSF3, SRSF7 and SRPK1. Interacts with host DHX9; this interaction may have an inhibitory effect on virion production. Interacts (via N-terminus) with host NXF1; this interaction plays a role in mRNA export. Phosphorylated by cellular protein kinase CK2.

The protein localises to the host nucleus. It localises to the host cytoplasm. In terms of biological role, promotes the nuclear export of a subset of early and late viral mRNAs by interacting with mRNAs and cellular export proteins. Additionally may prevent the establishment of cellular antiviral state, by acting as an alternative splicing factor for cellular RNAs such as STAT1, resulting in a STAT1 mRNA incapable of producing the STAT1alpha isoform. This is mRNA export factor ICP27 homolog from Homo sapiens (Human).